We begin with the raw amino-acid sequence, 195 residues long: Ribonuclease HII (195 aa).

In terms of domain architecture, RNase H type-2 spans 6 to 195 (SLIAGVDEVG…KSFISRLEIN (190 aa)). Asp-12, Glu-13, and Asp-108 together coordinate a divalent metal cation.

This sequence belongs to the RNase HII family. Requires Mn(2+) as cofactor. Mg(2+) serves as cofactor.

Its subcellular location is the cytoplasm. The enzyme catalyses Endonucleolytic cleavage to 5'-phosphomonoester.. Endonuclease that specifically degrades the RNA of RNA-DNA hybrids. The chain is Ribonuclease HII from Prochlorococcus marinus (strain NATL1A).